Here is a 188-residue protein sequence, read N- to C-terminus: Ion-translocating oxidoreductase complex subunit B (188 aa).

The hydrophobic stretch occupies residues 1-26 (MNGVFLAIGALLPICLAGGALLGYAA). The 59-residue stretch at 32–90 (QGDPVAEQVNALLPQTQCGQCGYPGCKPYAEAIAAGDKINKCPPGGEATIRALADLLDL) folds into the 4Fe-4S domain. Residues C49, C52, C57, C73, C113, C116, C119, C123, C143, C146, C149, and C153 each coordinate [4Fe-4S] cluster. 4Fe-4S ferredoxin-type domains follow at residues 104–133 (RVAY…GAAR) and 134–163 (LMHT…MREI).

Belongs to the 4Fe4S bacterial-type ferredoxin family. RnfB subfamily. The complex is composed of six subunits: RnfA, RnfB, RnfC, RnfD, RnfE and RnfG. Requires [4Fe-4S] cluster as cofactor.

It localises to the cell inner membrane. In terms of biological role, part of a membrane-bound complex that couples electron transfer with translocation of ions across the membrane. This chain is Ion-translocating oxidoreductase complex subunit B, found in Pseudomonas aeruginosa (strain LESB58).